We begin with the raw amino-acid sequence, 1166 residues long: Reverse gyrase 2 (1166 aa).

The RG N-terminal-type zinc-finger motif lies at 1-40 (MINVMYKNSCPNCGGDISGDRLLNGLPCEACLPYINGIDD). Zn(2+) is bound by residues Cys-10, Cys-13, Cys-28, and Cys-31. ATP-binding positions include Gln-92 and 109–116 (APTGLGKT). The region spanning 96 to 285 (LRRLASNQSF…ALRLLTGFEP (190 aa)) is the Helicase ATP-binding domain. The DEAD box signature appears at 190–193 (DDAD). The topoisomerase I stretch occupies residues 576-1166 (FNISTGLLIV…VNPLKSEQNV (591 aa)). The region spanning 580–743 (TGLLIVESPT…NVYRVVYHEI (164 aa)) is the Toprim domain. A Mg(2+)-binding site is contributed by Glu-586. An RG C-terminal-type zinc finger spans residues 662–689 (IKKCLDCNKIFSSASDKCPYCGSANLQS). Zn(2+) is bound by residues Cys-665, Cys-668, Cys-679, and Cys-682. Asp-712 contributes to the Mg(2+) binding site. The 399-residue stretch at 759 to 1157 (NTNLVMSQIV…EIFSEISTLV (399 aa)) folds into the Topo IA-type catalytic domain. Tyr-903 acts as the O-(5'-phospho-DNA)-tyrosine intermediate in catalysis.

In the N-terminal section; belongs to the DEAD box helicase family. DDVD subfamily. It in the C-terminal section; belongs to the type IA topoisomerase family. In terms of assembly, monomer. Zn(2+) is required as a cofactor. It depends on Mg(2+) as a cofactor.

Its subcellular location is the cytoplasm. The catalysed reaction is ATP + H2O = ADP + phosphate + H(+). At least one of the 2 proteins is inhibited by actinomycin D. Less sensitive to NaCl than TopR1, maximal positive supercoiling is observed with 100 mM NaCl; as NaCl rises higher than 400 mM supercoiling decreases. At 600 mM NaCl relaxes but does not introduce positive supercoils into negatively supercoiled substrate. Functionally, modifies the topological state of DNA by introducing positive supercoils in an ATP-dependent process. A highly processive enzyme, it introduces a large number of positive supercoils directly in a negatively supercoiled substrate. At 75 degrees Celsius introduces more than 23 positive supercoils into pTZ18R DNA (probably 2860 bp), more than TopR1; unlike TopR1 little to no relaxation of the negatively supercoiled substrate is seen in the presence of ATP, in the absence of ATP no activity is seen. At 45 degrees Celsius the enzyme is slower and in vitro individual steps can be detected. It cleaves transiently a single DNA strand and remains covalently bound to the 5' DNA end through a tyrosine residue. May be involved in DNA damage response. May be involved in rewinding the DNA strands in the regions of the chromosome that have opened up to allow transcription or replication. There are 2 genes for this protein in the cell. During exponential growth this is the more highly expressed isoform (about 125 molecules per cell at 80 degrees Celsius, about 117 molecules at 88 degrees Celsius); this isoform is less active at higher temperature. Grows actively at both 80 and 88 degrees Celsius; survives a long exposure at 45 degrees Celsius without DNA replication or cell division occurring. Experiments using whole cell extracts do not distinguish which isoform is present, the results are probably a mixture of the two forms. This chain is Reverse gyrase 2, found in Saccharolobus solfataricus (strain ATCC 35092 / DSM 1617 / JCM 11322 / P2) (Sulfolobus solfataricus).